A 731-amino-acid chain; its full sequence is Catalase-peroxidase (731 aa).

The segment at residues 98–226 is a cross-link (tryptophyl-tyrosyl-methioninium (Trp-Tyr) (with M-252)); sequence WHAAGTYRTA…LAAVQMGLIY (129 aa). H99 serves as the catalytic Proton acceptor. The tryptophyl-tyrosyl-methioninium (Tyr-Met) (with W-98) cross-link spans 226–252; that stretch reads YVNPEGPDGNPDIVASGHDVIETFGRM. H267 is a heme b binding site.

This sequence belongs to the peroxidase family. Peroxidase/catalase subfamily. In terms of assembly, homodimer or homotetramer. Heme b is required as a cofactor. In terms of processing, formation of the three residue Trp-Tyr-Met cross-link is important for the catalase, but not the peroxidase activity of the enzyme.

It carries out the reaction H2O2 + AH2 = A + 2 H2O. The catalysed reaction is 2 H2O2 = O2 + 2 H2O. In terms of biological role, bifunctional enzyme with both catalase and broad-spectrum peroxidase activity. In Ruegeria pomeroyi (strain ATCC 700808 / DSM 15171 / DSS-3) (Silicibacter pomeroyi), this protein is Catalase-peroxidase.